We begin with the raw amino-acid sequence, 374 residues long: Fasciclin-like arabinogalactan protein CTB11 (374 aa).

Residues 1–18 form the signal peptide; that stretch reads MHFPALAVAGCLLSRATA. 2 consecutive FAS1 domains span residues 19–171 and 173–302; these read QSLD…DANM and LPHN…DGAL. Residues N52, N72, N120, N132, and N176 are each glycosylated (N-linked (GlcNAc...) asparagine). Residues 328-348 form a helical membrane-spanning segment; that stretch reads ILASHQLTLLAVLAMALVSIL.

This sequence belongs to the fasciclin-like AGP family.

Its subcellular location is the membrane. Its pathway is mycotoxin biosynthesis. Functionally, fasciclin-like arabinogalactan protein; part of the gene cluster that mediates the biosynthesis of cercosporin, a light-activated, non-host-selective toxin. The perylenequinone chromophore of cercosporin absorbs light energy to attain an electronically-activated triplet state and produces active oxygen species such as the hydroxyl radical, superoxide, hydrogen peroxide or singlet oxygen upon reaction with oxygen molecules. These reactive oxygen species cause damage to various cellular components including lipids, proteins and nucleic acids. The first step of cercosporin biosynthesis is performed by the polyketide synthase CTB1 which catalyzes the formation of nor-toralactone. The starter unit acyltransferase (SAT) domain of CTB1 initiates polyketide extension by the selective utilization of acetyl-CoA, which is elongated to the heptaketide in the beta-ketoacyl synthase (KS) domain by successive condensations with six malonyl units introduced by the malonyl acyltransferase (MAT) domain. The product template (PT) domain catalyzes C4-C9 and C2-C11 aldol cyclizations and dehydrations to a trihydroxynaphthalene, which is thought to be delivered to the thioesterase (TE) domain for product release. The bifunctional enzyme CTB3 then methylates nor-toralactone to toralactone before conducting an unusual oxidative aromatic ring opening. The O-methyltransferase CTB2 further methylates the nascent OH-6 of the CBT3 product, blocking further oxidation at this site before the reductase CTB6 reduces the 2-oxopropyl ketone at position C7, giving naphthalene. The FAD-dependent monooxygenase CTB5 in concert with the multicopper oxidase CTB12 are responsible for homodimerization of naphthalene with CTB7 installing the dioxepine moiety, finally producing cercosporin. The fasciclin domain-containing protein CTB11 might act with CTB5 and CTB12 whereas the roles of CTB9 and CTB10 have still to be elucidated. The sequence is that of Fasciclin-like arabinogalactan protein CTB11 from Cercospora beticola (Sugarbeet leaf spot fungus).